Consider the following 121-residue polypeptide: Ribosome-binding factor A (121 aa).

This sequence belongs to the RbfA family. Monomer. Binds 30S ribosomal subunits, but not 50S ribosomal subunits or 70S ribosomes.

It is found in the cytoplasm. One of several proteins that assist in the late maturation steps of the functional core of the 30S ribosomal subunit. Associates with free 30S ribosomal subunits (but not with 30S subunits that are part of 70S ribosomes or polysomes). Required for efficient processing of 16S rRNA. May interact with the 5'-terminal helix region of 16S rRNA. The protein is Ribosome-binding factor A of Paraburkholderia phytofirmans (strain DSM 17436 / LMG 22146 / PsJN) (Burkholderia phytofirmans).